A 285-amino-acid polypeptide reads, in one-letter code: HTH-type transcriptional regulator MurR (285 aa).

An HTH rpiR-type domain is found at 1–77 (MLYLTKIRNA…MALIGEYSAS (77 aa)). The H-T-H motif DNA-binding region spans 37-56 (SRKMAKQLGISQSSIVKFAQ). The SIS domain occupies 128–268 (IIEVISKAPF…FVGLVQLNDV (141 aa)).

Homotetramer.

It functions in the pathway amino-sugar metabolism; N-acetylmuramate degradation [regulation]. Functionally, represses the expression of the murPQ operon involved in the uptake and degradation of N-acetylmuramic acid (MurNAc). Binds to two adjacent inverted repeats within the operator region. MurNAc 6-phosphate, the substrate of MurQ, is the specific inducer that weakens binding of MurR to the operator. The protein is HTH-type transcriptional regulator MurR of Escherichia coli O7:K1 (strain IAI39 / ExPEC).